The primary structure comprises 354 residues: Elongation factor Ts (354 aa).

An involved in Mg(2+) ion dislocation from EF-Tu region spans residues Thr81–Val84.

This sequence belongs to the EF-Ts family.

The protein localises to the cytoplasm. Functionally, associates with the EF-Tu.GDP complex and induces the exchange of GDP to GTP. It remains bound to the aminoacyl-tRNA.EF-Tu.GTP complex up to the GTP hydrolysis stage on the ribosome. The protein is Elongation factor Ts of Campylobacter curvus (strain 525.92).